Consider the following 1026-residue polypeptide: Glutactin (1026 aa).

Residues 1 to 17 (MKPLLLVLALCGAQVHA) form the signal peptide. 2 positions are modified to sulfotyrosine: Tyr-26 and Tyr-29. Asn-115 carries an N-linked (GlcNAc...) asparagine glycan. An intrachain disulfide couples Cys-123 to Cys-145. Tyr-182 is subject to Sulfotyrosine. Cys-298 and Cys-316 are oxidised to a cystine. Asn-368 and Asn-402 each carry an N-linked (GlcNAc...) asparagine glycan. At Tyr-559 the chain carries Sulfotyrosine. Positions 601–641 (PITTTTTTTTTTTTTSRPYAYNPYANWQNRPSQQHPNWHPA) are disordered. Residues 603 to 615 (TTTTTTTTTTTTT) are compositionally biased toward low complexity. Polar residues predominate over residues 625-636 (ANWQNRPSQQHP). Position 645 is a sulfotyrosine (Tyr-645). Disordered regions lie at residues 659 to 695 (EREQ…REQE) and 723 to 1026 (EREQ…NSRN). Positions 723 to 752 (EREQYEREQQEREQREREELERQQREREQQ) are enriched in basic and acidic residues. Tyr-727 carries the sulfotyrosine modification. Asn-810 carries an N-linked (GlcNAc...) asparagine glycan. Over residues 811–854 (FSEEDREQQQQEQLRREQQEQQEREYQLQLEREQQEREQQERGQ) the composition is skewed to basic and acidic residues. Tyr-836, Tyr-862, Tyr-865, Tyr-868, Tyr-922, and Tyr-928 each carry sulfotyrosine. The segment covering 855–866 (QEPGPEEYPSYE) has biased composition (low complexity). The span at 867 to 893 (EYSRALQEKNAERDRIYAEEQERERQQ) shows a compositional bias: basic and acidic residues. Positions 923–944 (DGDRSYAEEQEREQQRRDQVEQ) are enriched in basic and acidic residues. The span at 945-969 (EREEQPDEDQGEEYERSPDEEEAAE) shows a compositional bias: acidic residues. A sulfotyrosine mark is found at Tyr-981, Tyr-984, and Tyr-1006. Residues 1002–1026 (EEERYRAQQEEEDRIQAERERNSRN) are compositionally biased toward basic and acidic residues.

The protein in the N-terminal section; belongs to the type-B carboxylesterase/lipase family. Post-translationally, extensively O-glycosylated and also N-glycosylated. About four tyrosines are sulfated.

Its subcellular location is the secreted. The protein localises to the extracellular space. The protein resides in the extracellular matrix. It localises to the basement membrane. Functionally, not known. Binds calcium ions. In Drosophila melanogaster (Fruit fly), this protein is Glutactin (Glt).